A 235-amino-acid polypeptide reads, in one-letter code: Octanoyltransferase (235 aa).

In terms of domain architecture, BPL/LPL catalytic spans 44 to 231 (DTTADELWLV…HQVGLPNENN (188 aa)). Residues 83 to 90 (RGGQVTYH), 150 to 152 (SLG), and 163 to 165 (GLA) contribute to the substrate site. Cys181 functions as the Acyl-thioester intermediate in the catalytic mechanism.

Belongs to the LipB family.

It is found in the cytoplasm. The catalysed reaction is octanoyl-[ACP] + L-lysyl-[protein] = N(6)-octanoyl-L-lysyl-[protein] + holo-[ACP] + H(+). Its pathway is protein modification; protein lipoylation via endogenous pathway; protein N(6)-(lipoyl)lysine from octanoyl-[acyl-carrier-protein]: step 1/2. Catalyzes the transfer of endogenously produced octanoic acid from octanoyl-acyl-carrier-protein onto the lipoyl domains of lipoate-dependent enzymes. Lipoyl-ACP can also act as a substrate although octanoyl-ACP is likely to be the physiological substrate. This Colwellia psychrerythraea (strain 34H / ATCC BAA-681) (Vibrio psychroerythus) protein is Octanoyltransferase.